Here is a 148-residue protein sequence, read N- to C-terminus: Large ribosomal subunit protein bL9 (148 aa).

This sequence belongs to the bacterial ribosomal protein bL9 family.

In terms of biological role, binds to the 23S rRNA. This is Large ribosomal subunit protein bL9 from Clostridium beijerinckii (strain ATCC 51743 / NCIMB 8052) (Clostridium acetobutylicum).